We begin with the raw amino-acid sequence, 299 residues long: uncharacterized protein (299 aa).

Residues Thr47 and Tyr109 each act as charge relay system in the active site. Tyr138 acts as the Proton donor in catalysis. Residue Lys168 is the Schiff-base intermediate with substrate of the active site.

It belongs to the DapA family. In terms of assembly, homotetramer.

The protein localises to the cytoplasm. This is an uncharacterized protein from Chloroflexus aurantiacus (strain ATCC 29366 / DSM 635 / J-10-fl).